A 266-amino-acid chain; its full sequence is MTNISAFLVKKLRARTGVGIMDCKRALMCMKGDIDKSVDFLRKMGQIKAEKKQFLLTQNGSIFISFDHNLGVMLELSSETDFVSKHKDFLCLGEKILDYVLTHPMESIEFIRKHFEDLRTSLVMQVNENIVIRRIQTLNKKYITGYLHGRRIGVLVQTSSINNHLAKEIAMHIAASNPKYLRSDLVPKSIMEREYEIQLELAMQSKKSKPILEKIIKGRMIKFANEISLLGQNFIFDPHRKVSEVILKNNIDVISFVRYEVGEKYI.

The involved in Mg(2+) ion dislocation from EF-Tu stretch occupies residues 80–83; sequence TDFV.

It belongs to the EF-Ts family.

It is found in the cytoplasm. Associates with the EF-Tu.GDP complex and induces the exchange of GDP to GTP. It remains bound to the aminoacyl-tRNA.EF-Tu.GTP complex up to the GTP hydrolysis stage on the ribosome. The chain is Elongation factor Ts from Buchnera aphidicola subsp. Baizongia pistaciae (strain Bp).